The following is a 267-amino-acid chain: MEVKIKQVDEVKISRYIIKETMEDWYQFVESDVVIVGAGPSGLSAAYYLAKAGLKTLVFERRLSFGGGIGGGAMLFHKLIIEKPADEILREVNVRLKEVEEGVYVVDSAEFMAKLATAAIDAGAKIIHGVTVDDVIFRENPLRVAGVAVEWTATQMASLHVDPIFISAKAVVDATGHDAEVISVAARKIPELGIVIPGEKSAYSERAEELTVINTGKVAEGLYAAGMAVTEVKGLPRMGPIFGAMVLSGKAVAEEITKDLLKSEIRT.

Residues Ser-41, 60–61 (ER), Gly-68, Val-132, and 160–162 (HVD) contribute to the NAD(+) site. Residues Asp-162 and His-177 each coordinate Fe cation. Met-227 is a binding site for NAD(+). Arg-237 is a glycine binding site.

This sequence belongs to the THI4 family. Homooctamer; tetramer of dimers. It depends on Fe(2+) as a cofactor.

The enzyme catalyses hydrogen sulfide + glycine + NAD(+) = ADP-5-ethyl-4-methylthiazole-2-carboxylate + nicotinamide + 3 H2O + H(+). It participates in cofactor biosynthesis; thiamine diphosphate biosynthesis. In terms of biological role, involved in the biosynthesis of the thiazole moiety of thiamine. Catalyzes the conversion of NAD and glycine to adenosine diphosphate 5-(2-hydroxyethyl)-4-methylthiazole-2-carboxylate (ADT), an adenylated thiazole intermediate, using free sulfide as a source of sulfur. In Saccharolobus islandicus (strain L.S.2.15 / Lassen #1) (Sulfolobus islandicus), this protein is Thiamine thiazole synthase.